We begin with the raw amino-acid sequence, 1198 residues long: DNA polymerase (1198 aa).

Disordered regions lie at residues 1 to 87 (MALV…PRGT), 179 to 199 (LEQP…PNPP), and 904 to 930 (QLAL…PPSG). Composition is skewed to low complexity over residues 30 to 40 (QQPTRAAPAPA) and 57 to 68 (APPTSGGSPASP).

This sequence belongs to the DNA polymerase type-B family. As to quaternary structure, heterodimer with the terminal protein; this heterodimer binds to bp 9 to 18 of the genome. Forms a complex with viral pTP, DBP and hosts NFIA and POU2F1/OCT1 for initiation of replication.

It localises to the host nucleus. The catalysed reaction is DNA(n) + a 2'-deoxyribonucleoside 5'-triphosphate = DNA(n+1) + diphosphate. Eukaryotic-type DNA polymerase involved in viral genomic replication. DNA synthesis is protein primed, and acts in a strand displacement replication. Assembles in complex with viral pTP, DBP, host NFIA and host POU2F1/OCT1 on viral origin of replication. The polymerase covalently transfers dCMP onto pTP, thereby initiating complementary strand synthesis. The polypeptide is DNA polymerase (Homo sapiens (Human)).